We begin with the raw amino-acid sequence, 579 residues long: Arginine--tRNA ligase (579 aa).

A 'HIGH' region motif is present at residues 127-137 (PNLAKEMHVGH).

The protein belongs to the class-I aminoacyl-tRNA synthetase family. Monomer.

Its subcellular location is the cytoplasm. It catalyses the reaction tRNA(Arg) + L-arginine + ATP = L-arginyl-tRNA(Arg) + AMP + diphosphate. This chain is Arginine--tRNA ligase, found in Azotobacter vinelandii (strain DJ / ATCC BAA-1303).